We begin with the raw amino-acid sequence, 256 residues long: Ribosomal RNA small subunit methyltransferase A (256 aa).

The S-adenosyl-L-methionine site is built by histidine 12, leucine 14, glycine 39, glutamate 60, aspartate 81, and asparagine 103.

Belongs to the class I-like SAM-binding methyltransferase superfamily. rRNA adenine N(6)-methyltransferase family. RsmA subfamily.

The protein resides in the cytoplasm. The catalysed reaction is adenosine(1518)/adenosine(1519) in 16S rRNA + 4 S-adenosyl-L-methionine = N(6)-dimethyladenosine(1518)/N(6)-dimethyladenosine(1519) in 16S rRNA + 4 S-adenosyl-L-homocysteine + 4 H(+). Functionally, specifically dimethylates two adjacent adenosines (A1518 and A1519) in the loop of a conserved hairpin near the 3'-end of 16S rRNA in the 30S particle. May play a critical role in biogenesis of 30S subunits. The sequence is that of Ribosomal RNA small subunit methyltransferase A from Methylibium petroleiphilum (strain ATCC BAA-1232 / LMG 22953 / PM1).